Here is a 592-residue protein sequence, read N- to C-terminus: Movement and RNA silencing protein VP6 (592 aa).

A disordered region spans residues 450-469; it reads SSDEENADDPNQGWNGTPVH.

The protein resides in the host cell junction. It localises to the host plasmodesma. Functionally, transports viral genome to neighboring plant cells directly through plasmosdesmata, without any budding. The movement protein allows efficient cell to cell propagation, by bypassing the host cell wall barrier. Displays sequence non-specific nucleic acid binding activity. Acts as a suppressor of RNA-mediated gene silencing, also known as post-transcriptional gene silencing (PTGS), a mechanism of plant viral defense that limits the accumulation of viral RNAs. The polypeptide is Movement and RNA silencing protein VP6 (Oryza latifolia (Indian wild rice)).